The following is a 50-amino-acid chain: uncharacterized protein (50 aa).

The chain crosses the membrane as a helical span at residues 10-29 (LFFYYPFFIIFLYIYLVFFI).

It localises to the plastid. It is found in the chloroplast membrane. This is an uncharacterized protein from Marchantia polymorpha (Common liverwort).